Consider the following 172-residue polypeptide: Small ribosomal subunit protein uS5 (172 aa).

An S5 DRBM domain is found at 17-80; that stretch reads LREKMISVNR…EQARRNMFKV (64 aa).

It belongs to the universal ribosomal protein uS5 family. Part of the 30S ribosomal subunit. Contacts proteins S4 and S8.

With S4 and S12 plays an important role in translational accuracy. In terms of biological role, located at the back of the 30S subunit body where it stabilizes the conformation of the head with respect to the body. This Burkholderia lata (strain ATCC 17760 / DSM 23089 / LMG 22485 / NCIMB 9086 / R18194 / 383) protein is Small ribosomal subunit protein uS5.